A 152-amino-acid polypeptide reads, in one-letter code: Clitocypin-4/-3 (152 aa).

Belongs to the protease inhibitor I48 family. Homodimer.

In terms of biological role, binds and inhibits cysteine proteinases. Inhibits most strongly papain and cathepsin L, more weakly bromelain and cathepsin B while it is completely ineffective against cathepsin H. The sequence is that of Clitocypin-4/-3 (clt4) from Clitocybe nebularis (Clouded agaric).